Reading from the N-terminus, the 352-residue chain is Ion-translocating oxidoreductase complex subunit D (352 aa).

Transmembrane regions (helical) follow at residues 20 to 40 (IMLL…WFFG), 42 to 62 (GTLV…ALVL), 89 to 109 (IPPL…VIIA), and 123 to 143 (PAMI…TSWL). Thr-187 is modified (FMN phosphoryl threonine). 5 helical membrane-spanning segments follow: residues 214–234 (ILAG…GLWL), 242–262 (WHIP…GWLF), 267–287 (LAAP…FFIL), 301–321 (LIFG…GGYP), and 322–342 (DGVA…DYYT).

This sequence belongs to the NqrB/RnfD family. The complex is composed of six subunits: RsxA, RsxB, RsxC, RsxD, RsxE and RsxG. It depends on FMN as a cofactor.

The protein resides in the cell inner membrane. In terms of biological role, part of a membrane-bound complex that couples electron transfer with translocation of ions across the membrane. Required to maintain the reduced state of SoxR. In Shigella sonnei (strain Ss046), this protein is Ion-translocating oxidoreductase complex subunit D.